A 569-amino-acid chain; its full sequence is GATOR1 complex protein NPRL3 (569 aa).

Disordered regions lie at residues 27 to 60 and 441 to 476; these read PFQR…DQDG and TPNA…SGDS. 2 stretches are compositionally biased toward polar residues: residues 34–52 and 441–468; these read HPAS…NNTG and TPNA…NSSA. Ser-476 carries the post-translational modification Phosphoserine.

This sequence belongs to the NPR3 family. In terms of assembly, within the GATOR complex, component of the GATOR1 subcomplex, made of DEPDC5, NPRL2 and NPRL3. GATOR1 mediates the strong interaction of the GATOR complex with small GTPases Rag (RagA/RRAGA, RagB/RRAGB, RagC/RRAGC and/or RagD/RRAGD) heterodimers. GATOR1 interacts with GPR155/LYCHOS; interaction takes place in presence of cholesterol and prevents interaction between GATOR1 and KICSTOR.

Its subcellular location is the lysosome membrane. Its function is as follows. As a component of the GATOR1 complex functions as an inhibitor of the amino acid-sensing branch of the mTORC1 pathway. In response to amino acid depletion, the GATOR1 complex has GTPase activating protein (GAP) activity and strongly increases GTP hydrolysis by RagA/RRAGA (or RagB/RRAGB) within heterodimeric Rag complexes, thereby turning them into their inactive GDP-bound form, releasing mTORC1 from lysosomal surface and inhibiting mTORC1 signaling. In the presence of abundant amino acids, the GATOR1 complex is negatively regulated by GATOR2, the other GATOR subcomplex, in this amino acid-sensing branch of the TORC1 pathway. This chain is GATOR1 complex protein NPRL3, found in Mus musculus (Mouse).